A 924-amino-acid chain; its full sequence is Protein translocase subunit SecA (924 aa).

Residues Gln-87, 105-109 (GEGKT), and Asp-517 contribute to the ATP site. A disordered region spans residues 886–906 (VPAADRDPNDPSTWGKVGRNE). 4 residues coordinate Zn(2+): Cys-908, Cys-910, Cys-919, and His-920.

This sequence belongs to the SecA family. Monomer and homodimer. Part of the essential Sec protein translocation apparatus which comprises SecA, SecYEG and auxiliary proteins SecDF-YajC and YidC. Zn(2+) is required as a cofactor.

It is found in the cell inner membrane. Its subcellular location is the cytoplasm. It catalyses the reaction ATP + H2O + cellular proteinSide 1 = ADP + phosphate + cellular proteinSide 2.. Its function is as follows. Part of the Sec protein translocase complex. Interacts with the SecYEG preprotein conducting channel. Has a central role in coupling the hydrolysis of ATP to the transfer of proteins into and across the cell membrane, serving both as a receptor for the preprotein-SecB complex and as an ATP-driven molecular motor driving the stepwise translocation of polypeptide chains across the membrane. This chain is Protein translocase subunit SecA, found in Azorhizobium caulinodans (strain ATCC 43989 / DSM 5975 / JCM 20966 / LMG 6465 / NBRC 14845 / NCIMB 13405 / ORS 571).